Reading from the N-terminus, the 374-residue chain is Lipoyl synthase, mitochondrial (374 aa).

The N-terminal 19 residues, 1–19 (MHSRSALLYRFLRPASRCF), are a transit peptide targeting the mitochondrion. Positions 103, 108, 114, 134, 138, 141, and 350 each coordinate [4Fe-4S] cluster. Residues 119-339 (ETGTATATIM…RLLGMEMGFR (221 aa)) form the Radical SAM core domain.

It belongs to the radical SAM superfamily. Lipoyl synthase family. It depends on [4Fe-4S] cluster as a cofactor. Expressed in leaves and flowers, but not in roots. Expressed in roots, rosette leaves, cauline leaves, stems, flowers and siliques.

It is found in the mitochondrion. It catalyses the reaction [[Fe-S] cluster scaffold protein carrying a second [4Fe-4S](2+) cluster] + N(6)-octanoyl-L-lysyl-[protein] + 2 oxidized [2Fe-2S]-[ferredoxin] + 2 S-adenosyl-L-methionine + 4 H(+) = [[Fe-S] cluster scaffold protein] + N(6)-[(R)-dihydrolipoyl]-L-lysyl-[protein] + 4 Fe(3+) + 2 hydrogen sulfide + 2 5'-deoxyadenosine + 2 L-methionine + 2 reduced [2Fe-2S]-[ferredoxin]. It participates in protein modification; protein lipoylation via endogenous pathway; protein N(6)-(lipoyl)lysine from octanoyl-[acyl-carrier-protein]: step 2/2. Its function is as follows. Catalyzes the radical-mediated insertion of two sulfur atoms into the C-6 and C-8 positions of the octanoyl moiety bound to the lipoyl domains of lipoate-dependent enzymes, thereby converting the octanoylated domains into lipoylated derivatives. Together with LIP2 is essential for mitochondrial protein lipoylation during seed development. Required for the lipoylation of mitochondrial pyruvate dehydrogenase component E2 proteins in leaves and roots. In Arabidopsis thaliana (Mouse-ear cress), this protein is Lipoyl synthase, mitochondrial.